The chain runs to 893 residues: Exocyst complex component 4 (893 aa).

Residues methionine 1–serine 27 form a disordered region.

The protein belongs to the SEC8 family. The exocyst complex is composed of sec-3/exoc1, sec-5/exoc2, sec-6/exoc3, sec-8/exoc4, sec-10/exoc5, sec-15/exoc6, exo-70/exoc7 and exo-84/exoc8. As to expression, pseudocoelom.

Its function is as follows. Component of the exocyst complex involved in the docking of exocytic vesicles with fusion sites on the plasma membrane. The chain is Exocyst complex component 4 (sec-8) from Caenorhabditis elegans.